A 157-amino-acid chain; its full sequence is Crossover junction endodeoxyribonuclease RuvC (157 aa).

Catalysis depends on residues Asp-7, Glu-67, and Asp-140. Mg(2+) is bound by residues Asp-7, Glu-67, and Asp-140.

This sequence belongs to the RuvC family. In terms of assembly, homodimer which binds Holliday junction (HJ) DNA. The HJ becomes 2-fold symmetrical on binding to RuvC with unstacked arms; it has a different conformation from HJ DNA in complex with RuvA. In the full resolvosome a probable DNA-RuvA(4)-RuvB(12)-RuvC(2) complex forms which resolves the HJ. It depends on Mg(2+) as a cofactor.

It localises to the cytoplasm. It carries out the reaction Endonucleolytic cleavage at a junction such as a reciprocal single-stranded crossover between two homologous DNA duplexes (Holliday junction).. In terms of biological role, the RuvA-RuvB-RuvC complex processes Holliday junction (HJ) DNA during genetic recombination and DNA repair. Endonuclease that resolves HJ intermediates. Cleaves cruciform DNA by making single-stranded nicks across the HJ at symmetrical positions within the homologous arms, yielding a 5'-phosphate and a 3'-hydroxyl group; requires a central core of homology in the junction. The consensus cleavage sequence is 5'-(A/T)TT(C/G)-3'. Cleavage occurs on the 3'-side of the TT dinucleotide at the point of strand exchange. HJ branch migration catalyzed by RuvA-RuvB allows RuvC to scan DNA until it finds its consensus sequence, where it cleaves and resolves the cruciform DNA. In Thermosipho melanesiensis (strain DSM 12029 / CIP 104789 / BI429), this protein is Crossover junction endodeoxyribonuclease RuvC.